We begin with the raw amino-acid sequence, 383 residues long: MRLLSFKKSKIVSIGTELEFQIIDCSSLSLVSRSKELMRALKDMRYRDQIKPEITQSMIEINSSIHQSAKEMYDELLELQKILVETAASIDIAFCGGGTHPFQQWTMQKIFPSKRFKKKFNQYRYLSKRATVFGQHIHIGCPTGDDAIYLTHALARYVPHFIAISASSPFYLGINTNYCSSRSTIFNAFPLSGVIPYLRNWQEFSDYYRKMYRWKIIENMKDFYWDIRPKPELGTIEIRVCDTPLTLRKSILITAYIQALALYLLEEKSVQLSHDLYYVYNYNRFQASRHGLEGELTVTDKDRPIPIMDDILETIKKIEQYINGLGNSEYIEELYSDVINKQNDSVLINKIYKQDGSFSKLVAAQCELWLSDSKDRKWMTQPS.

The protein belongs to the glutamate--cysteine ligase type 2 family. YbdK subfamily.

It carries out the reaction L-cysteine + L-glutamate + ATP = gamma-L-glutamyl-L-cysteine + ADP + phosphate + H(+). ATP-dependent carboxylate-amine ligase which exhibits weak glutamate--cysteine ligase activity. The sequence is that of Putative glutamate--cysteine ligase 2 from Legionella pneumophila subsp. pneumophila (strain Philadelphia 1 / ATCC 33152 / DSM 7513).